The primary structure comprises 643 residues: Transcription elongation factor B polypeptide 3 (643 aa).

The 74-residue stretch at 9 to 82 folds into the TFIIS N-terminal domain; the sequence is DVVRHYQRSI…TKWKAMVAKE (74 aa). Disordered stretches follow at residues 86–289 and 302–351; these read IAST…MGAN and SSKK…SKKP. Positions 94–106 are enriched in basic and acidic residues; that stretch reads HNEEDSGKTKSSD. A compositionally biased stretch (polar residues) spans 114 to 124; sequence KGGNSSSGEDL. Phosphoserine is present on S120. Basic residues predominate over residues 127–136; that stretch reads SKHKSKHAKS. Composition is skewed to basic and acidic residues over residues 164 to 198 and 207 to 237; these read HDKS…KDSS and SKSE…VKDK. Residues 238–255 are compositionally biased toward basic residues; that stretch reads SSKHKSSSSKSSKRSHSP. Residues 302–336 are compositionally biased toward low complexity; that stretch reads SSKKSSSNSKSKFVAKPTAAPSSSALSAPTTAGSS. An activation domain region spans residues 413–571; the sequence is AQGISSKTMR…PPRSVQRKQE (159 aa). The segment at 439–448 is interacting with Elongin BC complex; sequence SLFDLCTRVL.

It is found in the nucleus. Its function is as follows. SIII, also known as elongin, is a general transcription elongation factor that increases the RNA polymerase II transcription elongation past template-encoded arresting sites. Subunit A is transcriptionally active and its transcription activity is strongly enhanced by binding to the dimeric complex of the SIII regulatory subunits B and C (elongin BC complex). May play an important role in metamorphosis. The sequence is that of Transcription elongation factor B polypeptide 3 (EloA) from Drosophila melanogaster (Fruit fly).